The chain runs to 399 residues: Argininosuccinate synthase (399 aa).

Residue 9–17 (AYSGGLDTS) participates in ATP binding. Y85 contacts L-citrulline. Position 115 (G115) interacts with ATP. L-aspartate contacts are provided by T117, N121, and D122. N121 is a binding site for L-citrulline. R125, S173, E258, and Y270 together coordinate L-citrulline.

The protein belongs to the argininosuccinate synthase family. Type 1 subfamily. As to quaternary structure, homotetramer.

The protein resides in the cytoplasm. The enzyme catalyses L-citrulline + L-aspartate + ATP = 2-(N(omega)-L-arginino)succinate + AMP + diphosphate + H(+). The protein operates within amino-acid biosynthesis; L-arginine biosynthesis; L-arginine from L-ornithine and carbamoyl phosphate: step 2/3. The chain is Argininosuccinate synthase from Streptococcus thermophilus (strain CNRZ 1066).